The sequence spans 320 residues: Olfactory receptor 2W1 (320 aa).

Residues 1-25 are Extracellular-facing; the sequence is MDQSNYSSLHGFILLGFSNHPKMEM. Asparagine 5 carries N-linked (GlcNAc...) asparagine glycosylation. The chain crosses the membrane as a helical span at residues 26–49; that stretch reads ILSGVVAIFYLITLVGNTAIILAS. The Cytoplasmic portion of the chain corresponds to 50 to 57; the sequence is LLDSQLHT. Residues 58 to 79 traverse the membrane as a helical segment; it reads PMYFFLRNLSFLDLCFTTSIIP. Residues 80 to 100 lie on the Extracellular side of the membrane; it reads QMLVNLWGPDKTISYVGCIIQ. A disulfide bridge links cysteine 97 with cysteine 189. A helical membrane pass occupies residues 101–120; it reads LYVYMWLGSVECLLLAVMSY. Over 121-139 the chain is Cytoplasmic; it reads DRFTAICKPLHYFVVMNPH. Residues 140 to 158 form a helical membrane-spanning segment; the sequence is LCLKMIIMIWSISLANSVV. Residues 159-195 are Extracellular-facing; sequence LCTLTLNLPTCGNNILDHFLCELPALVKIACVDTTTV. The helical transmembrane segment at 196 to 219 threads the bilayer; that stretch reads EMSVFALGIIIVLTPLILILISYG. Over 220 to 236 the chain is Cytoplasmic; that stretch reads YIAKAVLRTKSKASQRK. Residues 237–259 form a helical membrane-spanning segment; it reads AMNTCGSHLTVVSMFYGTIIYMY. Topologically, residues 260 to 272 are extracellular; sequence LQPGNRASKDQGK. The chain crosses the membrane as a helical span at residues 273-292; that stretch reads FLTLFYTVITPSLNPLIYTL. Residues 293–320 are Cytoplasmic-facing; it reads RNKDMKDALKKLMRFHHKSTKIKRNCKS.

Belongs to the G-protein coupled receptor 1 family.

It is found in the cell membrane. Its function is as follows. Odorant receptor. This chain is Olfactory receptor 2W1 (OR2W1), found in Homo sapiens (Human).